Here is a 432-residue protein sequence, read N- to C-terminus: Enolase (432 aa).

A (2R)-2-phosphoglycerate-binding site is contributed by Gln-167. Glu-209 functions as the Proton donor in the catalytic mechanism. Residues Asp-246, Glu-290, and Asp-317 each coordinate Mg(2+). Positions 342, 371, 372, and 393 each coordinate (2R)-2-phosphoglycerate. The active-site Proton acceptor is the Lys-342.

This sequence belongs to the enolase family. As to quaternary structure, component of the RNA degradosome, a multiprotein complex involved in RNA processing and mRNA degradation. Requires Mg(2+) as cofactor.

It is found in the cytoplasm. It localises to the secreted. Its subcellular location is the cell surface. The enzyme catalyses (2R)-2-phosphoglycerate = phosphoenolpyruvate + H2O. The protein operates within carbohydrate degradation; glycolysis; pyruvate from D-glyceraldehyde 3-phosphate: step 4/5. In terms of biological role, catalyzes the reversible conversion of 2-phosphoglycerate (2-PG) into phosphoenolpyruvate (PEP). It is essential for the degradation of carbohydrates via glycolysis. The chain is Enolase from Salmonella dublin (strain CT_02021853).